We begin with the raw amino-acid sequence, 1243 residues long: Protein MMS22-like (1243 aa).

Belongs to the MMS22 family. MMS22L subfamily. In terms of assembly, component of the MMS22L-TONSL complex.

The protein resides in the nucleus. The protein localises to the chromosome. In terms of biological role, component of the MMS22L-TONSL complex, a complex that promotes homologous recombination-mediated repair of double-strand breaks (DSBs) at stalled or collapsed replication forks. The MMS22L-TONSL complex is required to maintain genome integrity during DNA replication. It mediates the assembly of RAD51 filaments on single-stranded DNA (ssDNA): the MMS22L-TONSL complex is recruited to DSBs following histone replacement by histone chaperones and eviction of the replication protein A complex (RPA/RP-A) from DSBs. Following recruitment to DSBs, the TONSL-MMS22L complex promotes recruitment of RAD51 filaments and subsequent homologous recombination. Within the complex, MMS22L acts by binding ssDNA. In Gallus gallus (Chicken), this protein is Protein MMS22-like (MMS22L).